The following is a 211-amino-acid chain: Large ribosomal subunit protein bL25 (211 aa).

Positions 175–211 (VSEPVEQDLGEESETEEEGAEGEKPAESTGEEPGDDE) are disordered. A compositionally biased stretch (acidic residues) spans 179 to 194 (VEQDLGEESETEEEGA).

This sequence belongs to the bacterial ribosomal protein bL25 family. CTC subfamily. As to quaternary structure, part of the 50S ribosomal subunit; part of the 5S rRNA/L5/L18/L25 subcomplex. Contacts the 5S rRNA. Binds to the 5S rRNA independently of L5 and L18.

This is one of the proteins that binds to the 5S RNA in the ribosome where it forms part of the central protuberance. The sequence is that of Large ribosomal subunit protein bL25 from Kocuria rhizophila (strain ATCC 9341 / DSM 348 / NBRC 103217 / DC2201).